Consider the following 158-residue polypeptide: Cyclic pyranopterin monophosphate synthase (158 aa).

Substrate is bound by residues 75 to 77 (LCH) and 113 to 114 (ME). D128 is an active-site residue.

This sequence belongs to the MoaC family. As to quaternary structure, homohexamer; trimer of dimers.

The enzyme catalyses (8S)-3',8-cyclo-7,8-dihydroguanosine 5'-triphosphate = cyclic pyranopterin phosphate + diphosphate. Its pathway is cofactor biosynthesis; molybdopterin biosynthesis. Functionally, catalyzes the conversion of (8S)-3',8-cyclo-7,8-dihydroguanosine 5'-triphosphate to cyclic pyranopterin monophosphate (cPMP). The sequence is that of Cyclic pyranopterin monophosphate synthase from Paraburkholderia xenovorans (strain LB400).